The following is a 2210-amino-acid chain: Orsellinic acid synthase ArmB (2210 aa).

Positions 38–261 (LLLDACHYAF…HKTTVDALYH (224 aa)) are N-terminal acylcarrier protein transacylase domain (SAT). In terms of domain architecture, Ketosynthase family 3 (KS3) spans 391-817 (QEPIAICGMS…GSNGALLLEE (427 aa)). Catalysis depends on for beta-ketoacyl synthase activity residues C561, H696, and H736. The malonyl-CoA:ACP transacylase (MAT) domain stretch occupies residues 915–1240 (VFVFSGQGGQ…GLTLSSSLSQ (326 aa)). The active-site For acyl/malonyl transferase activity is the S1009. The segment at 1307-1437 (MLQSWAQFPS…GQFRPLLVVD (131 aa)) is N-terminal hotdog fold. Residues 1307–1614 (MLQSWAQFPS…FKKLRLNTLQ (308 aa)) enclose the PKS/mFAS DH domain. The interval 1336–1611 (ITGHIVGDVP…GMCFKKLRLN (276 aa)) is product template (PT) domain. The Proton acceptor; for dehydratase activity role is filled by H1339. Residues 1464–1614 (AEVFTTRTAY…FKKLRLNTLQ (151 aa)) form a C-terminal hotdog fold region. The active-site Proton donor; for dehydratase activity is D1525. A Carrier 1 domain is found at 1660–1735 (VDVQNTVLNI…ELVREISSTV (76 aa)). Residue S1694 is modified to O-(pantetheine 4'-phosphoryl)serine. The interval 1739-1761 (AATAVNTPETASTPEPTLQGDAS) is disordered. The Carrier 2 domain occupies 1845–1922 (SSPSSDLVDT…AVNQYISSKR (78 aa)). S1882 bears the O-(pantetheine 4'-phosphoryl)serine mark. The disordered stretch occupies residues 1920-1946 (SKRPGKSPKQVEETAMDPDREEDLSDL). Positions 1933–1944 (TAMDPDREEDLS) are enriched in acidic residues. The thioesterase (TE) domain stretch occupies residues 1963-2202 (VPMSVQKSSS…LGAVTQALVD (240 aa)).

It functions in the pathway secondary metabolite biosynthesis. Non-reducing polyketide synthase, part of the gene cluster that mediates the biosynthesis of melleolides, a range of antifungal and phytotoxic polyketide derivatives composed of an orsellinic acid (OA) moiety esterified to various sesquiterpene alcohols. The first step in melleolides biosynthesis is performed by the delta(6)-protoilludene synthase PRO1 which catalyzes the cyclization of farnesyl diphosphate to protoilludene. The orsellinic acid synthase armB produces OA by condensing acetyl-CoA with 3 malonyl-CoA units in a three-round chain elongation reaction folowed by a C2-C7 ring closure. ArmB further catalyzes the trans-esterification of OA to the various sesquiterpene alcohols resulting from the hydroxylation of protoilludene. The melleolides cluster also includes 5 cytochrome P450 monooxygenases, 4 NAD(+)-dependent oxidoreductases, one flavin-dependent oxidoreductase, and one O-methyltransferase. The cytochrome P450 monooxygenases may be involved in protoilludene hydroxylation to elaborate melleolides with multiple alcohol groups, such as melleolide D, which carries alcohol functionalities at C-4, C-5, C-10, and C-13. The role of the NAD(+)-dependent enzymes remains unknown. Numerous melleolides, including arnamial, show 5'-O-methylation of the aromatic moiety which may be catalyzed by the methyltransferase encoded in the cluster. The flavin-dependent oxidoreductase might represent the dehydrogenase yielding the aldehyde in position 1 of arnamial and other melleolides. Finally, several halogenase localized outside of the cluster (armH1 to armH5), are able to catalyze the transfer of a single chlorine atom to the melleolide backbone, resulting in a 6'-chloromelleolide product. The protein is Orsellinic acid synthase ArmB of Armillaria ostoyae (Armillaria root rot fungus).